Here is a 560-residue protein sequence, read N- to C-terminus: Interferon alpha/beta receptor 1 (560 aa).

An N-terminal signal peptide occupies residues 1–24 (MLSLLGATTLMLVAGRWVLPAASG). Over 25–437 (EANLKSENVE…EKTKPGNTSK (413 aa)) the chain is Extracellular. Residues Asn47 and Asn55 are each glycosylated (N-linked (GlcNAc...) asparagine). Cys76 and Cys84 are oxidised to a cystine. N-linked (GlcNAc...) asparagine glycans are attached at residues Asn85, Asn108, Asn109, and Asn172. 3 Fibronectin type-III domains span residues 126-226 (QIGP…TTER), 231-329 (SPEN…TEVK), and 333-433 (FPPV…TKPG). An intrachain disulfide couples Cys199 to Cys220. Residues Asn222, Asn285, Asn313, Asn359, and Asn377 are each glycosylated (N-linked (GlcNAc...) asparagine). A disulfide bond links Cys283 and Cys291. An intrachain disulfide couples Cys404 to Cys427. The N-linked (GlcNAc...) asparagine glycan is linked to Asn434. A helical membrane pass occupies residues 438–458 (TWLIAGICTALFSILVVIYVV). The Cytoplasmic portion of the chain corresponds to 459 to 560 (RVFLRCVKYV…SEEFLQQDSV (102 aa)). Cys464 carries the S-palmitoyl cysteine lipid modification. Residues Tyr467 and Tyr482 each carry the phosphotyrosine; by TYK2 modification. The interval 492–501 (LLSTSEEQTE) is important for interaction with TYK2. Residues Ser496 and Ser536 each carry the phosphoserine modification. Residues 524–560 (VHEEYNSQASQDSGNYSNEDENSGSKISEEFLQQDSV) are disordered. Residues 529-540 (NSQASQDSGNYS) are compositionally biased toward polar residues.

Belongs to the type II cytokine receptor family. In terms of assembly, heterodimer with IFNAR2; forming the receptor for type I interferon. Interacts with TYK2. Interacts with STAT1 and STAT2; the interaction requires its phosphorylation at Tyr-482. Interacts (serine-phosphorylated form) with FBXW11, the substrate recognition component of a SCF (SKP1-CUL1-F-box protein) E3 ubiquitin-protein ligase complex. Interacts with SHMT2; this promotes interaction with ABRAXAS2 and the BRISC complex. Interacts with TRIM10; this interaction prevents association between IFNAR1 and TYK2. Ubiquitinated, leading to its internalization and degradation. Polyubiquitinated via 'Lys-48'-linked and 'Lys-63'-linked ubiquitin chains, leading to receptor internalization and lysosomal degradation. The 'Lys-63'-linked ubiquitin chains are cleaved off by the BRISC complex. Post-translationally, phosphorylated on tyrosine residues in response to interferon-binding: phosphorylation by TYK2 tyrosine kinase creates docking sites for STAT proteins. Phosphorylated on serine residues in response to interferon binding; this promotes interaction with FBXW11 and ubiquitination. In terms of processing, palmitoylation at Cys-464 is required for the activation of STAT1 and STAT2. In terms of tissue distribution, expressed in the endometrium. Expressed in all tissues examined except conceptus at day 15 of pregnancy.

It is found in the cell membrane. The protein localises to the late endosome. The protein resides in the lysosome. Its function is as follows. Together with IFNAR2, forms the heterodimeric receptor for type I interferons (including interferons alpha, beta, epsilon, omega and kappa). Type I interferon binding activates the JAK-STAT signaling cascade, resulting in transcriptional activation or repression of interferon-regulated genes that encode the effectors of the interferon response. Mechanistically, type I interferon-binding brings the IFNAR1 and IFNAR2 subunits into close proximity with one another, driving their associated Janus kinases (JAKs) (TYK2 bound to IFNAR1 and JAK1 bound to IFNAR2) to cross-phosphorylate one another. The activated kinases phosphorylate specific tyrosine residues on the intracellular domains of IFNAR1 and IFNAR2, forming docking sites for the STAT transcription factors. STAT proteins are then phosphorylated by the JAKs, promoting their translocation into the nucleus to regulate expression of interferon-regulated genes. Can also act independently of IFNAR2: form an active IFNB1 receptor by itself and activate a signaling cascade that does not involve activation of the JAK-STAT pathway. The chain is Interferon alpha/beta receptor 1 (IFNAR1) from Ovis aries (Sheep).